A 344-amino-acid polypeptide reads, in one-letter code: MSVVVRHDWDHKELQALFDLPFPELLHRAASVHRAHFDPAEVQVSTLLSVKTGGCPEDCAYCPQAQRYDTGVTAQKLLETEEVVAKARQAKAAGASRFCMGAAWRSPKERDIPKVAAMIREVKAMGLETCATLGMLDAGQARALKDAGLDYYNHNLDTAPDYYDTIIHTRQYQDRLNTLEHVRDVGLKTCCGGIVGMGETRDHRIGLLLALATLPAHPDSVPINQLVQVPGTPLHGTQQLDPFEFVRMIAVARIAMPKSMVRLSAGREAMSDELQALCFLAGANSIFYGEKLLTTGNPDTERDQTLFQRLGLRPMQITVDAAEHDHPATVHAEITRSAACEHTA.

The Radical SAM core domain occupies 40-267; sequence AEVQVSTLLS…KSMVRLSAGR (228 aa). [4Fe-4S] cluster contacts are provided by cysteine 55, cysteine 59, and cysteine 62. 4 residues coordinate [2Fe-2S] cluster: cysteine 99, cysteine 130, cysteine 190, and arginine 262.

This sequence belongs to the radical SAM superfamily. Biotin synthase family. In terms of assembly, homodimer. The cofactor is [4Fe-4S] cluster. Requires [2Fe-2S] cluster as cofactor.

The catalysed reaction is (4R,5S)-dethiobiotin + (sulfur carrier)-SH + 2 reduced [2Fe-2S]-[ferredoxin] + 2 S-adenosyl-L-methionine = (sulfur carrier)-H + biotin + 2 5'-deoxyadenosine + 2 L-methionine + 2 oxidized [2Fe-2S]-[ferredoxin]. It functions in the pathway cofactor biosynthesis; biotin biosynthesis; biotin from 7,8-diaminononanoate: step 2/2. In terms of biological role, catalyzes the conversion of dethiobiotin (DTB) to biotin by the insertion of a sulfur atom into dethiobiotin via a radical-based mechanism. In Xanthomonas oryzae pv. oryzae (strain PXO99A), this protein is Biotin synthase.